Consider the following 267-residue polypeptide: Proteasome subunit alpha (267 aa).

The tract at residues 231 to 267 (ETLLQERDSKESAESEEPIESEEGKKTGKKSDADSSD) is disordered. 2 stretches are compositionally biased toward basic and acidic residues: residues 234–243 (LQERDSKESA) and 252–267 (EEGK…DSSD).

The protein belongs to the peptidase T1A family. As to quaternary structure, the 20S proteasome core is composed of 14 alpha and 14 beta subunits that assemble into four stacked heptameric rings, resulting in a barrel-shaped structure. The two inner rings, each composed of seven catalytic beta subunits, are sandwiched by two outer rings, each composed of seven alpha subunits. The catalytic chamber with the active sites is on the inside of the barrel. Has a gated structure, the ends of the cylinder being occluded by the N-termini of the alpha-subunits. Is capped by the proteasome-associated ATPase, ARC.

Its subcellular location is the cytoplasm. It participates in protein degradation; proteasomal Pup-dependent pathway. Its activity is regulated as follows. The formation of the proteasomal ATPase ARC-20S proteasome complex, likely via the docking of the C-termini of ARC into the intersubunit pockets in the alpha-rings, may trigger opening of the gate for substrate entry. Interconversion between the open-gate and close-gate conformations leads to a dynamic regulation of the 20S proteasome proteolysis activity. Functionally, component of the proteasome core, a large protease complex with broad specificity involved in protein degradation. The protein is Proteasome subunit alpha of Mycobacterium ulcerans (strain Agy99).